A 504-amino-acid polypeptide reads, in one-letter code: MKNEKRKTGIEPKVFFPPLIIVGILCWLTVRDLDAANVVINAVFSYVTNVWGWAFEWYMVVMLFGWFWLVFGPYAKKRLGNEPPEFSTASWIFMMFASCTSAAVLFWGSIEIYYYISTPPFGLEPNSTGAKELGLAYSLFHWGPLPWATYSFLSVAFAYFFFVRKMEVIRPSSTLVPLVGEKHAKGLFGTIVDNFYLVALIFAMGTSLGLATPLVTECMQWLFGIPHTLQLDAIIITCWIILNTICVACGLQKGVRIASDVRSYLSFLMLGWVFIVSGASFIMNYFTDSVGMLLMYLPRMLFYTDPIAKGGFPQGWTVFYWAWWVIYAIQMSIFLARISRGRTVRELCFGMVLGLTASTWILWTVLGSNTLLLIDKNIINIPNLIEQYGVARAIIETWAALPLSTATMWGFFILCFIATVTLVNACSYTLAMSTCREVRDGEEPPLLVRIGWSVLVGIIGIVLLALGGLKPIQTAIIAGGCPLFFVNIMVTLSFIKDAKQNWKD.

12 consecutive transmembrane segments (helical) span residues 10-30 (IEPKVFFPPLIIVGILCWLTV), 51-71 (WGWAFEWYMVVMLFGWFWLVF), 92-112 (IFMMFASCTSAAVLFWGSIEI), 143-163 (GPLPWATYSFLSVAFAYFFFV), 195-215 (FYLVALIFAMGTSLGLATPLV), 231-251 (LDAIIITCWIILNTICVACGL), 263-283 (SYLSFLMLGWVFIVSGASFIM), 316-336 (WTVFYWAWWVIYAIQMSIFLA), 347-367 (LCFGMVLGLTASTWILWTVLG), 398-418 (WAALPLSTATMWGFFILCFIA), 446-466 (LLVRIGWSVLVGIIGIVLLAL), and 475-495 (AIIAGGCPLFFVNIMVTLSFI).

It belongs to the BCCT transporter (TC 2.A.15) family. CaiT subfamily. As to quaternary structure, homotrimer.

Its subcellular location is the cell inner membrane. The enzyme catalyses 4-(trimethylamino)butanoate(in) + (R)-carnitine(out) = 4-(trimethylamino)butanoate(out) + (R)-carnitine(in). The protein operates within amine and polyamine metabolism; carnitine metabolism. Its function is as follows. Catalyzes the exchange of L-carnitine for gamma-butyrobetaine. This is L-carnitine/gamma-butyrobetaine antiporter from Escherichia coli O81 (strain ED1a).